The sequence spans 101 residues: Apolipoprotein C-II (101 aa).

Residues 1–22 (MGTRYFLVGFLILLVLGFEVQG) form the signal peptide. The lipid binding stretch occupies residues 66-74 (AVDEKIRDI). The segment at 78 to 101 (STAAVTTYAGIITDQVFSVLSGKD) is lipoprotein lipase cofactor.

The protein belongs to the apolipoprotein C2 family. In terms of processing, proapolipoprotein C-II is synthesized as a sialic acid containing glycoprotein which is subsequently desialylated prior to its proteolytic processing. Proapolipoprotein C-II undergoes proteolytic cleavage of its N-terminal hexapeptide to generate apolipoprotein C-II. In bovine, proapolipoprotein C-II was found to be the minor form whereas apolipoprotein C-II was found to be the major form in plasma.

The protein localises to the secreted. Component of chylomicrons, very low-density lipoproteins (VLDL), low-density lipoproteins (LDL), and high-density lipoproteins (HDL) in plasma. Plays an important role in lipoprotein metabolism as an activator of lipoprotein lipase. Both proapolipoprotein C-II and apolipoprotein C-II can activate lipoprotein lipase. The chain is Apolipoprotein C-II (APOC2) from Bos taurus (Bovine).